The sequence spans 238 residues: Ribonuclease PH (238 aa).

Phosphate contacts are provided by residues arginine 86 and glycine 124 to arginine 126.

This sequence belongs to the RNase PH family. Homohexameric ring arranged as a trimer of dimers.

The enzyme catalyses tRNA(n+1) + phosphate = tRNA(n) + a ribonucleoside 5'-diphosphate. Phosphorolytic 3'-5' exoribonuclease that plays an important role in tRNA 3'-end maturation. Removes nucleotide residues following the 3'-CCA terminus of tRNAs; can also add nucleotides to the ends of RNA molecules by using nucleoside diphosphates as substrates, but this may not be physiologically important. Probably plays a role in initiation of 16S rRNA degradation (leading to ribosome degradation) during starvation. This Geotalea daltonii (strain DSM 22248 / JCM 15807 / FRC-32) (Geobacter daltonii) protein is Ribonuclease PH.